A 488-amino-acid polypeptide reads, in one-letter code: N-succinylglutamate 5-semialdehyde dehydrogenase (488 aa).

221–226 contacts NAD(+); sequence GSSRTG. Active-site residues include Glu244 and Cys278.

Belongs to the aldehyde dehydrogenase family. AstD subfamily.

It carries out the reaction N-succinyl-L-glutamate 5-semialdehyde + NAD(+) + H2O = N-succinyl-L-glutamate + NADH + 2 H(+). Its pathway is amino-acid degradation; L-arginine degradation via AST pathway; L-glutamate and succinate from L-arginine: step 4/5. Functionally, catalyzes the NAD-dependent reduction of succinylglutamate semialdehyde into succinylglutamate. This chain is N-succinylglutamate 5-semialdehyde dehydrogenase, found in Pseudomonas syringae pv. tomato (strain ATCC BAA-871 / DC3000).